Reading from the N-terminus, the 276-residue chain is MLIKFTKMHGLGNDFMVVDLISQHAHFRPEQVRRLADRNFGVGFDQLLIVEPPGRPDADFRYRIFNADGSEVEQCGNGARCFARFVKENRLTNKKNIRVETKKGIIELIVNKDGLVTVDMGAPRLAPADIPFVAETQEAIYPIEVNGVMYEISAVSMGNPHGVLVVDDVNKAPVHKLGKALENHPRFPERANIGFLQVVHRRFAKLRVFERGAGETLACGTGACAAVVAGRLRGLLDRKVEIKLPGGNLKISWEGEGHPVMMTGPAVRVFDGQVRI.

Substrate-binding residues include N13, Q46, and N66. C75 acts as the Proton donor in catalysis. Substrate is bound by residues 76 to 77, N159, N192, and 210 to 211; these read GN and ER. The active-site Proton acceptor is C219. 220–221 contacts substrate; sequence GT.

The protein belongs to the diaminopimelate epimerase family. As to quaternary structure, homodimer.

The protein resides in the cytoplasm. The catalysed reaction is (2S,6S)-2,6-diaminopimelate = meso-2,6-diaminopimelate. It functions in the pathway amino-acid biosynthesis; L-lysine biosynthesis via DAP pathway; DL-2,6-diaminopimelate from LL-2,6-diaminopimelate: step 1/1. Functionally, catalyzes the stereoinversion of LL-2,6-diaminopimelate (L,L-DAP) to meso-diaminopimelate (meso-DAP), a precursor of L-lysine and an essential component of the bacterial peptidoglycan. The polypeptide is Diaminopimelate epimerase (Hahella chejuensis (strain KCTC 2396)).